A 545-amino-acid polypeptide reads, in one-letter code: Probable intron-encoded endonuclease 4 (545 aa).

The next 7 helical transmembrane spans lie at 1-21, 30-50, 81-101, 119-139, 140-160, 177-197, and 200-220; these read MYLS…FFGR, LITC…FFEV, LTVA…IYSI, LFTF…MFVG, WEGV…RIAA, FLTI…YATV, and LAPY…LIGA. The segment at 1–239 is ndh-5 exons 1 and 2 encoded; it reads MYLSIIILPL…HVWLPMAMEG (239 aa). A ndh-5 intron 2 encoded region spans residues 240-545; sequence FFSRAFLKLH…NNINKSDYNK (306 aa).

This sequence in the N-terminal section; belongs to the complex I subunit 5 family. In the C-terminal section; belongs to the LAGLIDADG endonuclease family.

It localises to the mitochondrion membrane. Mitochondrial DNA endonuclease involved in intron homing. In Neurospora crassa (strain ATCC 24698 / 74-OR23-1A / CBS 708.71 / DSM 1257 / FGSC 987), this protein is Probable intron-encoded endonuclease 4.